Consider the following 202-residue polypeptide: MGNSKSGALSKEILEELQLNTKFTEEELSAWYQSFLKECPSGRITRQEFESIYSKFFPDSDPKAYAQHVFRSFDANSDGTLDFKEYVIALHMTTAGKPTQKLEWAFSLYDVDGNGTISKNEVLEIVMAIFKMIKPEDVKLLPDDENTPEKRAEKIWAFFGKKEDDKLTEEEFIEGTLANKEILRLIQFEPQKVKERIKEKKQ.

A lipid anchor (N-myristoyl glycine) is attached at Gly2. Cys39 is modified (cysteine sulfenic acid (-SOH)). 4 EF-hand domains span residues 41–59 (SGRI…FFPD), 61–96 (DPKA…TTAG), 97–132 (KPTQ…IFKM), and 147–182 (TPEK…NKEI). Residues Asp74, Asn76, Asp78, Thr80, Glu85, Asp110, Asp112, Asn114, Thr116, and Glu121 each coordinate Ca(2+). The segment at 189 to 192 (EPQK) is interaction with GRK1.

This sequence belongs to the recoverin family. In terms of assembly, homodimer; disulfide-linked. Homodimerization is caused by prolonged intense illumination. May form a complex composed of RHO, GRK1 and RCVRN in a Ca(2+)-dependent manner; RCVRN prevents the interaction between GRK1 and RHO. Interacts (via C-terminus) with GRK1 (via N-terminus); the interaction is Ca(2+)-dependent. In terms of processing, the N-terminal glycine is linked to one of four different types of acyl groups. The most abundant is myristoleate (14:1), but 14:0, 14:2, and 12:0 acyl residues are also present. The Ca(2+) induced exposure of the myristoyl group, known as the calcium-myristoyl switch, promotes RCVRN binding to the photoreceptor cell membranes only when intracellular Ca(2+) concentration is high. Oxidation on Cys-39 occurs in response to prolonged intense illumination and results in the formation of disulfide homodimers, and to a lesser extent disulfide-linked heterodimers. As to expression, expressed in rod photoreceptors in the retina (at protein level).

The protein localises to the photoreceptor inner segment. It is found in the cell projection. The protein resides in the cilium. Its subcellular location is the photoreceptor outer segment. It localises to the photoreceptor outer segment membrane. The protein localises to the perikaryon. Acts as a calcium sensor and regulates phototransduction of cone and rod photoreceptor cells. Modulates light sensitivity of cone photoreceptor in dark and dim conditions. In response to high Ca(2+) levels induced by low light levels, prolongs RHO/rhodopsin activation in rod photoreceptor cells by binding to and inhibiting GRK1-mediated phosphorylation of RHO/rhodopsin. Plays a role in scotopic vision/enhances vision in dim light by enhancing signal transfer between rod photoreceptors and rod bipolar cells. Improves rod photoreceptor sensitivity in dim light and mediates response of rod photoreceptors to facilitate detection of change and motion in bright light. The sequence is that of Recoverin (Rcvrn) from Mus musculus (Mouse).